The following is a 40-amino-acid chain: uncharacterized protein (40 aa).

Over residues 1–14 (MNRMLSLSVQSQRA) the composition is skewed to polar residues. The segment at 1–25 (MNRMLSLSVQSQRAPASPSPYGLKI) is disordered.

This is an uncharacterized protein from Treponema pallidum (strain Nichols).